A 328-amino-acid chain; its full sequence is D-cysteine desulfhydrase (328 aa).

Position 51 is an N6-(pyridoxal phosphate)lysine (lysine 51).

This sequence belongs to the ACC deaminase/D-cysteine desulfhydrase family. As to quaternary structure, homodimer. Requires pyridoxal 5'-phosphate as cofactor.

It catalyses the reaction D-cysteine + H2O = hydrogen sulfide + pyruvate + NH4(+) + H(+). Its function is as follows. Catalyzes the alpha,beta-elimination reaction of D-cysteine and of several D-cysteine derivatives. It could be a defense mechanism against D-cysteine. This Salmonella paratyphi B (strain ATCC BAA-1250 / SPB7) protein is D-cysteine desulfhydrase.